The primary structure comprises 383 residues: tRNA(Met) cytidine acetate ligase (383 aa).

Residues 7–20 (ISEY…HLYQ), Gly102, Asn160, and 181–182 (RI) each bind ATP.

Belongs to the TmcAL family.

Its subcellular location is the cytoplasm. The enzyme catalyses cytidine(34) in elongator tRNA(Met) + acetate + ATP = N(4)-acetylcytidine(34) in elongator tRNA(Met) + AMP + diphosphate. Its function is as follows. Catalyzes the formation of N(4)-acetylcytidine (ac(4)C) at the wobble position of elongator tRNA(Met), using acetate and ATP as substrates. First activates an acetate ion to form acetyladenylate (Ac-AMP) and then transfers the acetyl group to tRNA to form ac(4)C34. The chain is tRNA(Met) cytidine acetate ligase from Exiguobacterium sibiricum (strain DSM 17290 / CCUG 55495 / CIP 109462 / JCM 13490 / 255-15).